Here is a 473-residue protein sequence, read N- to C-terminus: tRNA modification GTPase MnmE (473 aa).

Residues Arg30, Glu95, and Arg134 each coordinate (6S)-5-formyl-5,6,7,8-tetrahydrofolate. Residues 230–394 form the TrmE-type G domain; that stretch reads GVAAVIAGRP…LKSTMAGMVE (165 aa). Residues 240 to 245, 259 to 265, and 284 to 287 each bind GTP; these read NAGKST, SHMPGTT, and DTAG. Mg(2+)-binding residues include Ser244 and Thr265. (6S)-5-formyl-5,6,7,8-tetrahydrofolate is bound at residue Lys473.

This sequence belongs to the TRAFAC class TrmE-Era-EngA-EngB-Septin-like GTPase superfamily. TrmE GTPase family. In terms of assembly, homodimer. Heterotetramer of two MnmE and two MnmG subunits. It depends on K(+) as a cofactor.

It localises to the cytoplasm. Its function is as follows. Exhibits a very high intrinsic GTPase hydrolysis rate. Involved in the addition of a carboxymethylaminomethyl (cmnm) group at the wobble position (U34) of certain tRNAs, forming tRNA-cmnm(5)s(2)U34. The protein is tRNA modification GTPase MnmE of Chlorobium phaeovibrioides (strain DSM 265 / 1930) (Prosthecochloris vibrioformis (strain DSM 265)).